Here is a 562-residue protein sequence, read N- to C-terminus: MNKIYCILFLSAQCLVHMGKCEPNQKPSRLTRSAKNVLLEQEPMVERSTRMSNPWKAFMEKYDIEKTHSSGIRVDLGEDAEVGNSSYRIPAGKCPVFGKGIVIQNSEVSFLTPVATGNQKLKDGGFAFPQANDHISPISIKNLRERYKENPDLMKLNDLALCKTHAASFVMEMDKNSSYRHPAVYDEDKKICYMLYLSAQENMGPRYCSKDAENKDAMFCFKPDKNETFDHLAYLSKNVVNDWQNKCPRKNLGNSKFGLWVDGNCEEIPYVQDVQAKDLRECNRIVFEASASDQPTQYEEELTDYQKIQEGFRQNDQGMIKSAFLPVGAFNSDNFKSKGRGYNWANFDTENKVCYLFNAKPTCLINDKNFIATTALSHPQEVDNEFPCSIYKDEMEREMRKESRNMSLYNVDKARIVLPRIFISNDKDSLKCPCAPEHITNSTCNFYVCNCVEKRAEIKENNEVAIKEEFKQDYQYAQGESKNQMLLIIIGITGGVCVVALASMFYFRKKAHNDKYDKMEQADGYGKPTTRKDEMLDPEASFWGEEKRASHTTPVLMEKPYY.

The signal sequence occupies residues methionine 1 to cysteine 21. The Extracellular segment spans residues glutamate 22–glutamine 484. Asparagine 84 and asparagine 176 each carry an N-linked (GlcNAc...) asparagine glycan. 8 disulfide bridges follow: cysteine 94-cysteine 247, cysteine 162-cysteine 192, cysteine 208-cysteine 220, cysteine 265-cysteine 363, cysteine 282-cysteine 354, cysteine 388-cysteine 444, cysteine 432-cysteine 449, and cysteine 434-cysteine 451. A glycan (N-linked (GlcNAc...) asparagine) is linked at asparagine 226. Asparagine 405 and asparagine 441 each carry an N-linked (GlcNAc...) asparagine glycan. A helical transmembrane segment spans residues methionine 485–phenylalanine 507. At arginine 508–tyrosine 562 the chain is on the cytoplasmic side. Residues methionine 519–tryptophan 543 are disordered.

Belongs to the apicomplexan parasites AMA1 family.

It is found in the membrane. In terms of biological role, involved in parasite invasion of erythrocytes. The protein is Apical membrane antigen 1 (AMA-1) of Plasmodium fragile.